Here is a 135-residue protein sequence, read N- to C-terminus: ATP synthase epsilon chain (135 aa).

The protein belongs to the ATPase epsilon chain family. In terms of assembly, F-type ATPases have 2 components, CF(1) - the catalytic core - and CF(0) - the membrane proton channel. CF(1) has five subunits: alpha(3), beta(3), gamma(1), delta(1), epsilon(1). CF(0) has three main subunits: a, b and c.

It localises to the cell inner membrane. Functionally, produces ATP from ADP in the presence of a proton gradient across the membrane. The sequence is that of ATP synthase epsilon chain from Rhizobium etli (strain ATCC 51251 / DSM 11541 / JCM 21823 / NBRC 15573 / CFN 42).